A 430-amino-acid polypeptide reads, in one-letter code: Probable dual-specificity RNA methyltransferase RlmN (430 aa).

E125 serves as the catalytic Proton acceptor. The Radical SAM core domain occupies 152-395; it reads RHGRVTLCVS…VTVRDTRGRE (244 aa). An intrachain disulfide couples C159 to C400. C166, C170, and C173 together coordinate [4Fe-4S] cluster. Residues 221–222, S255, 278–280, and N357 each bind S-adenosyl-L-methionine; these read GE and SLH. C400 functions as the S-methylcysteine intermediate in the catalytic mechanism.

The protein belongs to the radical SAM superfamily. RlmN family. Requires [4Fe-4S] cluster as cofactor.

Its subcellular location is the cytoplasm. The catalysed reaction is adenosine(2503) in 23S rRNA + 2 reduced [2Fe-2S]-[ferredoxin] + 2 S-adenosyl-L-methionine = 2-methyladenosine(2503) in 23S rRNA + 5'-deoxyadenosine + L-methionine + 2 oxidized [2Fe-2S]-[ferredoxin] + S-adenosyl-L-homocysteine. The enzyme catalyses adenosine(37) in tRNA + 2 reduced [2Fe-2S]-[ferredoxin] + 2 S-adenosyl-L-methionine = 2-methyladenosine(37) in tRNA + 5'-deoxyadenosine + L-methionine + 2 oxidized [2Fe-2S]-[ferredoxin] + S-adenosyl-L-homocysteine. Specifically methylates position 2 of adenine 2503 in 23S rRNA and position 2 of adenine 37 in tRNAs. The chain is Probable dual-specificity RNA methyltransferase RlmN from Acidothermus cellulolyticus (strain ATCC 43068 / DSM 8971 / 11B).